Reading from the N-terminus, the 487-residue chain is Glutamate--tRNA ligase (487 aa).

The 'HIGH' region motif lies at 10–20 (PSPTGYMHVGN). The 'KMSKS' region motif lies at 251–255 (KLSKR). Residue lysine 254 coordinates ATP.

This sequence belongs to the class-I aminoacyl-tRNA synthetase family. Glutamate--tRNA ligase type 1 subfamily. As to quaternary structure, monomer.

It is found in the cytoplasm. The enzyme catalyses tRNA(Glu) + L-glutamate + ATP = L-glutamyl-tRNA(Glu) + AMP + diphosphate. Catalyzes the attachment of glutamate to tRNA(Glu) in a two-step reaction: glutamate is first activated by ATP to form Glu-AMP and then transferred to the acceptor end of tRNA(Glu). The sequence is that of Glutamate--tRNA ligase from Clostridium kluyveri (strain ATCC 8527 / DSM 555 / NBRC 12016 / NCIMB 10680 / K1).